The following is a 199-amino-acid chain: MTDGGMTKDAIGAGALAGEGLRAFFERDAITVARDLLGCHLTVDGAGGRITETEAYFPDDEASHSFRGPTKRNGAMFGRPGNVYIYRIYGMYWCLNFVCHPGSAVLIRALEPETGIAAMMERRGTDMLTALCSGPGKLCQALGIDIEINDRLLDLPPYALTPSTPVPIVAGKRIGITRNAEAPWRFGIQGSRYLSKPFR.

Belongs to the DNA glycosylase MPG family.

The protein is Putative 3-methyladenine DNA glycosylase of Rhizobium etli (strain ATCC 51251 / DSM 11541 / JCM 21823 / NBRC 15573 / CFN 42).